The following is a 318-amino-acid chain: tRNA uridine(34) hydroxylase (318 aa).

A Rhodanese domain is found at 123-217; it reads EDDDTVIIDA…YGKDPETKGQ (95 aa). The Cysteine persulfide intermediate role is filled by cysteine 177.

This sequence belongs to the TrhO family.

It catalyses the reaction uridine(34) in tRNA + AH2 + O2 = 5-hydroxyuridine(34) in tRNA + A + H2O. Functionally, catalyzes oxygen-dependent 5-hydroxyuridine (ho5U) modification at position 34 in tRNAs. This chain is tRNA uridine(34) hydroxylase, found in Staphylococcus aureus (strain bovine RF122 / ET3-1).